The sequence spans 105 residues: UPF0145 protein (105 aa).

It belongs to the UPF0145 family.

In Enterococcus faecalis (Streptococcus faecalis), this protein is UPF0145 protein.